A 317-amino-acid chain; its full sequence is Probable cell division protein WhiA (317 aa).

Residues Ser275 to Glu308 constitute a DNA-binding region (H-T-H motif).

The protein belongs to the WhiA family.

Its function is as follows. Involved in cell division and chromosome segregation. This Desulfitobacterium hafniense (strain Y51) protein is Probable cell division protein WhiA.